A 514-amino-acid polypeptide reads, in one-letter code: MSVSKKPMVLVILDGYGYREEQQDNAILNAKTPVMDALWAKRPHTLIDASGLEVGLPDRQMGNSEVGHVNLGAGRIVYQDLTRLDVEIKERTFFANPVLTNAVDQAKNAGKAVHIMGLLSAGGVHSHEDHIMAMVELAAERGAEKIYLHAFLDGRDTPPRSAEASLKKFEDKFAALGKGRVASIVGRYYAMDRDNRWDRVEKAYDLMTLAQGEFQADTAVAGLQAAYARDENDEFVKATVILAEGQADAAMEDGDTLIFMNFRADRAREITRAFVNADFDGFARKKVVNLNFVMLTEYAADIKTAVAYPPASLVNTFGEWMAKNDKTQLRISETEKYAHVTFFFNGGVEEPFAGEERILINSPKVATYDLQPEMSSAELTEKLVAAIESGKYDTIICNYPNGDMVGHTGVMEAAIKAVEALDNCIEQVTKAVESVGGQLLITADHGNAEQMRDPATGQAHTAHTNLPVPLIYVGEKNVKAVEGGKLSDIAPTMLSLMGMEIPQEMTGKPLFIVE.

Mn(2+) is bound by residues aspartate 14 and serine 64. Residue serine 64 is the Phosphoserine intermediate of the active site. Substrate-binding positions include histidine 125, 155–156 (RD), arginine 187, arginine 193, 263–266 (RADR), and lysine 336. Aspartate 403, histidine 407, aspartate 444, histidine 445, and histidine 463 together coordinate Mn(2+).

This sequence belongs to the BPG-independent phosphoglycerate mutase family. As to quaternary structure, monomer. Mn(2+) is required as a cofactor.

It carries out the reaction (2R)-2-phosphoglycerate = (2R)-3-phosphoglycerate. Its pathway is carbohydrate degradation; glycolysis; pyruvate from D-glyceraldehyde 3-phosphate: step 3/5. Its function is as follows. Catalyzes the interconversion of 2-phosphoglycerate and 3-phosphoglycerate. The protein is 2,3-bisphosphoglycerate-independent phosphoglycerate mutase of Salmonella paratyphi B (strain ATCC BAA-1250 / SPB7).